Consider the following 161-residue polypeptide: MMTSEASLFLQTPQHLFCGFETCHLTSDPLQTHSWLESVQFGLNILLCTKCNQSICDVLETLLQLYFKNRHNAKFWLVPQHFLTSKPQKPNIPSDCVAPTLFFFTTDGPLCWHQKLNVPLNINYEEYIHKAITVFEKVPSLTINKDMYIKIESWKNILCLL.

This is an uncharacterized protein from Saimiri sciureus (Common squirrel monkey).